We begin with the raw amino-acid sequence, 265 residues long: Thymidylate synthase (265 aa).

R21 contributes to the dUMP binding site. Position 51 (H51) interacts with (6R)-5,10-methylene-5,6,7,8-tetrahydrofolate. Position 127–128 (127–128) interacts with dUMP; it reads RR. C147 serves as the catalytic Nucleophile. DUMP contacts are provided by residues 167 to 170, N178, and 208 to 210; these read RSAD and HLY. D170 serves as a coordination point for (6R)-5,10-methylene-5,6,7,8-tetrahydrofolate. (6R)-5,10-methylene-5,6,7,8-tetrahydrofolate is bound at residue S264.

The protein belongs to the thymidylate synthase family. Bacterial-type ThyA subfamily. In terms of assembly, homodimer.

The protein resides in the cytoplasm. It carries out the reaction dUMP + (6R)-5,10-methylene-5,6,7,8-tetrahydrofolate = 7,8-dihydrofolate + dTMP. Its pathway is pyrimidine metabolism; dTTP biosynthesis. Catalyzes the reductive methylation of 2'-deoxyuridine-5'-monophosphate (dUMP) to 2'-deoxythymidine-5'-monophosphate (dTMP) while utilizing 5,10-methylenetetrahydrofolate (mTHF) as the methyl donor and reductant in the reaction, yielding dihydrofolate (DHF) as a by-product. This enzymatic reaction provides an intracellular de novo source of dTMP, an essential precursor for DNA biosynthesis. This is Thymidylate synthase from Neisseria gonorrhoeae.